The sequence spans 506 residues: Trans-cinnamate 4-monooxygenase (506 aa).

A helical transmembrane segment spans residues 3–23 (LLLLEKALLGLFAAAVVAIAV). Residues 213-218 (RSRLAQ) and Ala306 contribute to the (E)-cinnamate site. Heme is bound at residue Cys447.

This sequence belongs to the cytochrome P450 family. Requires heme as cofactor.

The protein resides in the membrane. It carries out the reaction (E)-cinnamate + reduced [NADPH--hemoprotein reductase] + O2 = (E)-4-coumarate + oxidized [NADPH--hemoprotein reductase] + H2O + H(+). The protein operates within phenylpropanoid metabolism; trans-4-coumarate biosynthesis; trans-4-coumarate from trans-cinnamate: step 1/1. Functionally, catalyzes the first oxidative step of the phenylpropanoid pathway in higher plants by transforming trans-cinnamate into p-coumarate. The compounds formed by this pathway are essential components for lignification, pollination, and defense against ultraviolet light, predators and pathogens. This is Trans-cinnamate 4-monooxygenase (CYP73A2) from Ruta graveolens (Common rue).